Consider the following 675-residue polypeptide: Electrogenic aspartate/glutamate antiporter SLC25A13, mitochondrial (675 aa).

A2 is modified (N-acetylalanine). A regulatory N-terminal domain region spans residues 2-295; sequence AAAKVALTKR…TLADIERIAP (294 aa). The Mitochondrial intermembrane portion of the chain corresponds to 2 to 331; it reads AAAKVALTKR…LLQVAESAYR (330 aa). 4 consecutive EF-hand domains span residues 51–86, 87–122, 125–157, and 158–193; these read SQPN…SVLC, APDA…TTIH, IPFN…FLLE, and IQLE…IRPH. Ca(2+) contacts are provided by D66, T68, D70, L72, and E77. Positions 296–311 are linker loop domain; the sequence is LEEGTLPFNLAEAQRQ. Residues 321 to 612 form a carrier domain region; the sequence is VLLQVAESAY…LQRWFYIDFG (292 aa). Solcar repeat units follow at residues 326-418, 426-510, and 518-606; these read AESA…VRDK, VPLA…VKAS, and VSPG…LQRW. Residues 332–349 traverse the membrane as a helical segment; sequence FGLGSVAGAVGATAVYPI. At 350–392 the chain is on the mitochondrial matrix side; that stretch reads DLVKTRMQNQRSTGSFVGELMYKNSFDCFKKVLRYEGFFGLYR. N6-acetyllysine is present on residues K353 and K372. Residues 393–412 form a helical membrane-spanning segment; the sequence is GLLPQLLGVAPEKAIKLTVN. At 413–435 the chain is on the mitochondrial intermembrane side; sequence DFVRDKFMHKDGSVPLAAEILAG. Residues 436–449 traverse the membrane as a helical segment; it reads GCAGGSQVIFTNPL. Over 450-484 the chain is Mitochondrial matrix; that stretch reads EIVKIRLQVAGEITTGPRVSALSVVRDLGFFGIYK. K453 is modified (N6-methyllysine). An N6-acetyllysine; alternate modification is found at K484. K484 is modified (N6-succinyllysine; alternate). A helical membrane pass occupies residues 485–504; that stretch reads GAKACFLRDIPFSAIYFPCY. Residues 505–523 are Mitochondrial intermembrane-facing; it reads AHVKASFANEDGQVSPGSL. The chain crosses the membrane as a helical span at residues 524–541; that stretch reads LLAGAIAGMPAASLVTPA. Residues 542 to 580 lie on the Mitochondrial matrix side of the membrane; it reads DVIKTRLQVAARAGQTTYSGVIDCFRKILREEGPKALWK. K580 is subject to N6-succinyllysine. Residues 581 to 600 form a helical membrane-spanning segment; sequence GAGARVFRSSPQFGVTLLTY. At 601–675 the chain is on the mitochondrial intermembrane side; the sequence is ELLQRWFYID…STSKAIGGGP (75 aa). The C-terminal domain stretch occupies residues 613–675; that stretch reads GVKPMGSEPV…STSKAIGGGP (63 aa). K662 bears the N6-acetyllysine mark. S666 bears the Phosphoserine mark.

It belongs to the mitochondrial carrier (TC 2.A.29) family. Homodimer (via N-terminus). As to expression, high levels in liver and low levels in kidney, pancreas, placenta, heart and brain.

It is found in the mitochondrion inner membrane. It carries out the reaction L-aspartate(in) + L-glutamate(out) + H(+)(out) = L-aspartate(out) + L-glutamate(in) + H(+)(in). The enzyme catalyses 3-sulfino-L-alanine(out) + L-glutamate(in) + H(+)(in) = 3-sulfino-L-alanine(in) + L-glutamate(out) + H(+)(out). It catalyses the reaction 3-sulfino-L-alanine(out) + L-aspartate(in) = 3-sulfino-L-alanine(in) + L-aspartate(out). With respect to regulation, activated by calcium-binding in the mitochondrial intermembrane space. Inhibited by pyridoxal 5'-phosphate, bathophenathroline, mercurials, diethyl pyrocarbonate and N-ethylmaleimide. Mitochondrial electrogenic aspartate/glutamate antiporter that favors efflux of aspartate and entry of glutamate and proton within the mitochondria as part of the malate-aspartate shuttle. Also mediates the uptake of L-cysteinesulfinate (3-sulfino-L-alanine) by mitochondria in exchange of L-glutamate and proton. Can also exchange L-cysteinesulfinate with aspartate in their anionic form without any proton translocation. Lacks transport activity towards gamma-aminobutyric acid (GABA). This is Electrogenic aspartate/glutamate antiporter SLC25A13, mitochondrial from Homo sapiens (Human).